The chain runs to 168 residues: Protein FAM163A (168 aa).

A helical transmembrane segment spans residues 6–26; sequence VVITGGILATVILLCIIAVLC.

This sequence belongs to the FAM163 family.

Its subcellular location is the membrane. The chain is Protein FAM163A (Fam163a) from Mus musculus (Mouse).